Here is a 204-residue protein sequence, read N- to C-terminus: Phosphopantothenoylcysteine decarboxylase (204 aa).

Residues phenylalanine 59 and 104–107 contribute to the FMN site; that span reads DANT. Position 140 (asparagine 140) interacts with substrate. The active-site Proton donor is the cysteine 173.

The protein belongs to the HFCD (homooligomeric flavin containing Cys decarboxylase) superfamily. As to quaternary structure, homotrimer. The cofactor is FMN.

The enzyme catalyses N-[(R)-4-phosphopantothenoyl]-L-cysteine + H(+) = (R)-4'-phosphopantetheine + CO2. The protein operates within cofactor biosynthesis; coenzyme A biosynthesis; CoA from (R)-pantothenate: step 3/5. Catalyzes the decarboxylation of the cysteine moiety of 4-phosphopantothenoylcysteine to form 4'-phosphopantotheine and this reaction forms part of the biosynthesis of coenzyme A. The sequence is that of Phosphopantothenoylcysteine decarboxylase (PPCDC) from Homo sapiens (Human).